Reading from the N-terminus, the 169-residue chain is Mediator of RNA polymerase II transcription subunit 28 (169 aa).

The interval 1–35 (MFSAQQPGPPPPNQPGAPAGLMSTPPGAKNPSSTL) is disordered. Residues 99-137 (EQVIKEDVSELRNELQRKEALIQKHLTKLRSWQQVLEEI) adopt a coiled-coil conformation.

It belongs to the Mediator complex subunit 28 family. As to quaternary structure, component of the Mediator complex.

It is found in the nucleus. In terms of biological role, component of the Mediator complex, a coactivator involved in the regulated transcription of nearly all RNA polymerase II-dependent genes. Mediator functions as a bridge to convey information from gene-specific regulatory proteins to the basal RNA polymerase II transcription machinery. Mediator is recruited to promoters by direct interactions with regulatory proteins and serves as a scaffold for the assembly of a functional preinitiation complex with RNA polymerase II and the general transcription factors. The sequence is that of Mediator of RNA polymerase II transcription subunit 28 (med28) from Xenopus tropicalis (Western clawed frog).